A 361-amino-acid chain; its full sequence is Phospho-N-acetylmuramoyl-pentapeptide-transferase (361 aa).

A run of 10 helical transmembrane segments spans residues Leu28 to Leu48, Thr74 to Leu94, Ile99 to Ala119, Leu135 to Ser155, Ser167 to Ala187, Val203 to Ile223, Thr236 to Phe256, Val263 to Ile283, Ile288 to Val308, and Lys338 to Leu358.

It belongs to the glycosyltransferase 4 family. MraY subfamily. It depends on Mg(2+) as a cofactor.

It localises to the cell inner membrane. The catalysed reaction is UDP-N-acetyl-alpha-D-muramoyl-L-alanyl-gamma-D-glutamyl-meso-2,6-diaminopimeloyl-D-alanyl-D-alanine + di-trans,octa-cis-undecaprenyl phosphate = di-trans,octa-cis-undecaprenyl diphospho-N-acetyl-alpha-D-muramoyl-L-alanyl-D-glutamyl-meso-2,6-diaminopimeloyl-D-alanyl-D-alanine + UMP. It participates in cell wall biogenesis; peptidoglycan biosynthesis. Catalyzes the initial step of the lipid cycle reactions in the biosynthesis of the cell wall peptidoglycan: transfers peptidoglycan precursor phospho-MurNAc-pentapeptide from UDP-MurNAc-pentapeptide onto the lipid carrier undecaprenyl phosphate, yielding undecaprenyl-pyrophosphoryl-MurNAc-pentapeptide, known as lipid I. The chain is Phospho-N-acetylmuramoyl-pentapeptide-transferase from Rickettsia bellii (strain RML369-C).